The sequence spans 256 residues: D-aminoacyl-tRNA deacylase (256 aa).

This sequence belongs to the DtdA deacylase family. As to quaternary structure, monomer. The cofactor is Zn(2+).

It catalyses the reaction a D-aminoacyl-tRNA + H2O = a tRNA + a D-alpha-amino acid + H(+). The enzyme catalyses glycyl-tRNA(Ala) + H2O = tRNA(Ala) + glycine + H(+). Functionally, D-aminoacyl-tRNA deacylase with broad substrate specificity. By recycling D-aminoacyl-tRNA to D-amino acids and free tRNA molecules, this enzyme counteracts the toxicity associated with the formation of D-aminoacyl-tRNA entities in vivo. The polypeptide is D-aminoacyl-tRNA deacylase (Thermoplasma volcanium (strain ATCC 51530 / DSM 4299 / JCM 9571 / NBRC 15438 / GSS1)).